Reading from the N-terminus, the 68-residue chain is DNA-directed RNA polymerase subunit Rpo10 (68 aa).

Zn(2+) is bound by residues cysteine 7, cysteine 10, cysteine 44, and cysteine 45.

It belongs to the archaeal Rpo10/eukaryotic RPB10 RNA polymerase subunit family. As to quaternary structure, part of the RNA polymerase complex. The cofactor is Zn(2+).

It is found in the cytoplasm. The enzyme catalyses RNA(n) + a ribonucleoside 5'-triphosphate = RNA(n+1) + diphosphate. DNA-dependent RNA polymerase (RNAP) catalyzes the transcription of DNA into RNA using the four ribonucleoside triphosphates as substrates. The chain is DNA-directed RNA polymerase subunit Rpo10 from Methanococcus vannielii (strain ATCC 35089 / DSM 1224 / JCM 13029 / OCM 148 / SB).